The chain runs to 248 residues: DNA repair protein RecO (248 aa).

It belongs to the RecO family.

Functionally, involved in DNA repair and RecF pathway recombination. The sequence is that of DNA repair protein RecO from Bacillus cereus (strain B4264).